The chain runs to 128 residues: UPF0212 protein TGAM_1344 (128 aa).

The protein belongs to the UPF0212 family.

In Thermococcus gammatolerans (strain DSM 15229 / JCM 11827 / EJ3), this protein is UPF0212 protein TGAM_1344.